We begin with the raw amino-acid sequence, 204 residues long: Inactive ribonuclease-like protein 9 (204 aa).

Residues 1–26 form the signal peptide; that stretch reads MMRTLITIHPLPLLLLLQQLLQPVQF. Intrachain disulfides connect C97–C152, C115–C167, and C122–C129. Residues N130 and N142 are each glycosylated (N-linked (GlcNAc...) asparagine).

This sequence belongs to the pancreatic ribonuclease family.

It is found in the secreted. Does not exhibit any ribonuclease activity. The sequence is that of Inactive ribonuclease-like protein 9 (RNASE9) from Symphalangus syndactylus (Siamang).